Consider the following 358-residue polypeptide: Metacaspase-3 (358 aa).

Residues M1–R84 form an important for catalytic activity region. Catalysis depends on residues H168 and C223.

It belongs to the peptidase C14B family. In terms of processing, in epimastigotes, the unprocessed enzyme appears to be the main form. Auto-processing is dispensable for catalytic activity towards small oligopeptide substrates.

Its subcellular location is the cytoplasm. The protein resides in the nucleus. With respect to regulation, activated by Ca(2+). Cysteine protease that cleaves specifically after arginine or lysine residues. In epimastigotes, may play a role in cell cycle G1/S transition. This chain is Metacaspase-3, found in Trypanosoma cruzi (strain CL Brener).